Consider the following 347-residue polypeptide: DNA polymerase III subunit delta (347 aa).

Belongs to the DNA polymerase HolA subunit family. As to quaternary structure, component of the DNA clamp loading complex consisting of tau(3):delta(1):delta'(1). The DNA polymerase III holoenzyme complex contains at least 10 different subunits organized into 3 functionally essential subassemblies: the Pol III core, the beta sliding clamp processivity factor and the clamp-loading complex. The Pol III core (subunits alpha, epsilon and theta) contains the polymerase and the 3'-5' exonuclease proofreading activities. The polymerase is tethered to the template via the dimeric beta sliding clamp processivity factor. The DNA clamp-loading complex assembles the beta sliding clamp onto the primed template and plays a central role in the organization and communication at the replication fork.

It localises to the cytoplasm. The protein localises to the nucleoid. The enzyme catalyses DNA(n) + a 2'-deoxyribonucleoside 5'-triphosphate = DNA(n+1) + diphosphate. Part of the beta sliding clamp loading complex, which hydrolyzes ATP to load the beta clamp onto primed DNA to form the DNA replication pre-initiation complex. DNA polymerase III is a complex, multichain enzyme responsible for most of the replicative synthesis in bacteria. This DNA polymerase also exhibits 3'-5' exonuclease activity. The delta subunit is the wrench that will open the beta subunit dimer. The DNA clamp loading complex (tau(3),delta,delta') is thought to load beta dimers onto DNA by binding ATP which alters the complex's conformation so it can bind beta sliding clamp dimers and open them at one interface. Primed DNA is recognized, ATP is hydrolyzed releasing the clamp loading complex and closing the beta sliding clamp ring around the primed DNA. The chain is DNA polymerase III subunit delta from Bacillus subtilis (strain 168).